The sequence spans 270 residues: Putative ABC transporter ATP-binding protein MG304 (270 aa).

The region spanning 1–232 is the ABC transporter domain; that stretch reads MLQVKNLSFK…LDLFHNHHFN (232 aa). 36–43 is a binding site for ATP; sequence GHNGSGKS.

It belongs to the ABC transporter superfamily.

This Mycoplasma genitalium (strain ATCC 33530 / DSM 19775 / NCTC 10195 / G37) (Mycoplasmoides genitalium) protein is Putative ABC transporter ATP-binding protein MG304.